A 134-amino-acid polypeptide reads, in one-letter code: Small ribosomal subunit protein bS16 (134 aa).

Residues 115–134 are disordered; sequence AKLRRRQAKKAAEAAGSAEG.

Belongs to the bacterial ribosomal protein bS16 family.

This chain is Small ribosomal subunit protein bS16, found in Chlorobaculum tepidum (strain ATCC 49652 / DSM 12025 / NBRC 103806 / TLS) (Chlorobium tepidum).